A 215-amino-acid polypeptide reads, in one-letter code: Cytochrome b6 (215 aa).

The chain crosses the membrane as a helical span at residues 32–52; that stretch reads IFYCLGGITLTCFLVQVATGF. Cys-35 is a binding site for heme c. Positions 86 and 100 each coordinate heme b. A run of 3 helical transmembrane segments spans residues 90–110, 116–136, and 186–206; these read ASMM…TGGF, LTWV…VTGY, and LHTF…FLMI. Positions 187 and 202 each coordinate heme b.

It belongs to the cytochrome b family. PetB subfamily. The 4 large subunits of the cytochrome b6-f complex are cytochrome b6, subunit IV (17 kDa polypeptide, PetD), cytochrome f and the Rieske protein, while the 4 small subunits are PetG, PetL, PetM and PetN. The complex functions as a dimer. It depends on heme b as a cofactor. Heme c is required as a cofactor.

It is found in the plastid. Its subcellular location is the chloroplast thylakoid membrane. Its function is as follows. Component of the cytochrome b6-f complex, which mediates electron transfer between photosystem II (PSII) and photosystem I (PSI), cyclic electron flow around PSI, and state transitions. This chain is Cytochrome b6, found in Klebsormidium bilatum (Filamentous green alga).